Here is a 793-residue protein sequence, read N- to C-terminus: MKISESWLRTWVNPAIDSTTLADQLTMLGLEVDELAPVAKPFTGVVVGEVLTVEQHPDADRLRVTTVNIGNGEPLQIVCGAPNLRVGMKAPVATIGAVLPGEFKIKKGKLRGIESQGMLCGASEIDLEDKIDGLLELPEDAPVGLNIREYLKLDDNIIDISITPNRGDCFSIRGIARDLAVLNQLEVTPPDIQAVEATLNEQKQVHLETEGAPRYLGRIIKNVNVKATTPEWMAQALAASGIRTHSILVDVTNYVLMELGQPMHAFDLAKLNGAIHVRQASAQEKLTLLNDQNVELNEDIMVIADDAKVLAIAGIMGGLESSVTDDTQDIFLESAFFAPLAIAGRARRFGLHTDSSQRFERGVDFELPLLAMNRASQLIQQFAGGEFGPITVAENTALLPKREAIELNQQQVSQLLGYEVETDFIADALTRLGCQVAVKAQGEWVVVAPSHRFDITIYQDLIEEVARIHGYDNIQIRLPKIDVKLAKYQDHLELGQLRQTIATLGYQEAISFSFADLKLEKQLNPDVNPLALANPISSDLAVMRSTLLSSLIPCVQHNLNRQQNRVRFFELGLRFDYQNAASIHDLQQTPTLALIAVGSSVPEQWHGKTQPMDFFDLKHDIEQILAAGRVKVEYVRSERAWLHPGQSAEILIAGQSIGYLGRLHPSLENDLDLGVTWVAELDQQAILQSYVSNFTELSRFPSVRRDIALLISDKINVSDIQQLIKQTGGDLLDSTWLFDVYTGQGVEEGKRSLAFALLWQHPSRTLEDAEIKSGMDNIIEVLENTYQATLRAS.

A tRNA-binding domain is found at 39 to 148; sequence AKPFTGVVVG…EDAPVGLNIR (110 aa). The 77-residue stretch at 400–476 folds into the B5 domain; the sequence is PKREAIELNQ…RIHGYDNIQI (77 aa). 4 residues coordinate Mg(2+): Asp-454, Asp-460, Glu-463, and Glu-464. In terms of domain architecture, FDX-ACB spans 698-791; it reads SRFPSVRRDI…LENTYQATLR (94 aa).

Belongs to the phenylalanyl-tRNA synthetase beta subunit family. Type 1 subfamily. As to quaternary structure, tetramer of two alpha and two beta subunits. Requires Mg(2+) as cofactor.

It is found in the cytoplasm. The enzyme catalyses tRNA(Phe) + L-phenylalanine + ATP = L-phenylalanyl-tRNA(Phe) + AMP + diphosphate + H(+). This chain is Phenylalanine--tRNA ligase beta subunit, found in Acinetobacter baylyi (strain ATCC 33305 / BD413 / ADP1).